A 594-amino-acid chain; its full sequence is UvrABC system protein C (594 aa).

A GIY-YIG domain is found at 17–94 (LEPGCYLMKD…IKQYQPRYNI (78 aa)). The UVR domain occupies 199 to 234 (KTILHHLEDRMNKASEQLDFEQAKEYRDMIQHIHNL).

It belongs to the UvrC family. As to quaternary structure, interacts with UvrB in an incision complex.

The protein localises to the cytoplasm. Its function is as follows. The UvrABC repair system catalyzes the recognition and processing of DNA lesions. UvrC both incises the 5' and 3' sides of the lesion. The N-terminal half is responsible for the 3' incision and the C-terminal half is responsible for the 5' incision. The chain is UvrABC system protein C from Staphylococcus epidermidis (strain ATCC 12228 / FDA PCI 1200).